Consider the following 371-residue polypeptide: Chitin deacetylase (371 aa).

The signal sequence occupies residues 1 to 20; that stretch reads MLCRLFTLFITAALACCVAA. A disordered region spans residues 73–112; sequence PKPEPEPTAVPTMAPEPTTVPPTEPSGTYPPETTPTVEPT. 2 stretches are compositionally biased toward low complexity: residues 79-89 and 102-112; these read PTAVPTMAPEP and PPETTPTVEPT. An intrachain disulfide couples Cys-164 to Cys-358. Asn-167 carries an N-linked (GlcNAc...) asparagine glycan. The 186-residue stretch at 168–353 folds into the NodB homology domain; sequence GTIALTFDDG…EIKKRGLRAV (186 aa). Asp-175 serves as the catalytic Proton acceptor. Position 175 (Asp-175) interacts with acetate. Co(2+) contacts are provided by Asp-176, His-228, and His-232. Asn-239 carries N-linked (GlcNAc...) asparagine glycosylation. Tyr-270 contacts acetate. The active-site Proton donor is the His-327.

Belongs to the polysaccharide deacetylase family. Requires Co(2+) as cofactor.

The enzyme catalyses [(1-&gt;4)-N-acetyl-beta-D-glucosaminyl](n) + n H2O = chitosan + n acetate. Its function is as follows. Hydrolyzes the N-acetamido groups of N-acetyl-D-glucosamine residues in chitin to form chitosan and acetate. The sequence is that of Chitin deacetylase from Arthroderma benhamiae (strain ATCC MYA-4681 / CBS 112371) (Trichophyton mentagrophytes).